A 68-amino-acid chain; its full sequence is Probable tautomerase HP_0924 (68 aa).

The active-site Proton acceptor; via imino nitrogen is the Pro2.

This sequence belongs to the 4-oxalocrotonate tautomerase family.

This is Probable tautomerase HP_0924 from Helicobacter pylori (strain ATCC 700392 / 26695) (Campylobacter pylori).